The primary structure comprises 501 residues: Cytochrome P450 90A4 (501 aa).

A helical transmembrane segment spans residues 2–22 (AAAALLLLAAAAAAVVVAMAL). C446 contributes to the heme binding site.

This sequence belongs to the cytochrome P450 family. The cofactor is heme.

It is found in the membrane. It participates in plant hormone biosynthesis; brassinosteroid biosynthesis. Its function is as follows. Catalyzes the C23-alpha-hydroxylation step in brassinosteroid biosynthesis. Converts 6-deoxocathasterone to 6-deoxoteasterone in the late C6-oxidation pathway and cathasterone to teasterone (TE) in the early C6-oxidation pathway of brassinolide (BL) biosynthesis. In Oryza sativa subsp. indica (Rice), this protein is Cytochrome P450 90A4.